A 241-amino-acid polypeptide reads, in one-letter code: Large ribosomal subunit protein uL3 (241 aa).

Disordered regions lie at residues 139 to 164 and 215 to 241; these read VSHR…KMPG and DAPK…QEGA. At glutamine 151 the chain carries N5-methylglutamine.

This sequence belongs to the universal ribosomal protein uL3 family. As to quaternary structure, part of the 50S ribosomal subunit. Forms a cluster with proteins L14 and L19. Methylated by PrmB.

In terms of biological role, one of the primary rRNA binding proteins, it binds directly near the 3'-end of the 23S rRNA, where it nucleates assembly of the 50S subunit. This is Large ribosomal subunit protein uL3 from Rhodopseudomonas palustris (strain BisB5).